The sequence spans 214 residues: Thymidylate kinase (214 aa).

11 to 18 (GPEGAGKT) is an ATP binding site.

This sequence belongs to the thymidylate kinase family.

It carries out the reaction dTMP + ATP = dTDP + ADP. Functionally, phosphorylation of dTMP to form dTDP in both de novo and salvage pathways of dTTP synthesis. The protein is Thymidylate kinase of Leuconostoc citreum (strain KM20).